Reading from the N-terminus, the 81-residue chain is Delta-conotoxin-like Ac6.3 (81 aa).

Residues 1 to 22 (MKLTCVMIVAVLFLTAWTFVTA) form the signal peptide. A propeptide spanning residues 23 to 51 (DDSRNGLENLSPKARHEMKNPEASKSNKR) is cleaved from the precursor. 3 cysteine pairs are disulfide-bonded: Cys-54/Cys-69, Cys-61/Cys-73, and Cys-68/Cys-78.

This sequence belongs to the conotoxin O1 superfamily. In terms of tissue distribution, expressed by the venom duct.

It is found in the secreted. In terms of biological role, delta-conotoxins bind to site 6 of voltage-gated sodium channels (Nav) and inhibit the inactivation process. The protein is Delta-conotoxin-like Ac6.3 of Conus achatinus (Little frog cone).